The chain runs to 627 residues: (R)-linalool synthase, chloroplastic (627 aa).

The N-terminal 21 residues, 1-21 (MAFVSIAPLASRCCVHKSFVS), are a transit peptide targeting the chloroplast. Asp378, Asp382, and Glu530 together coordinate Mg(2+). The short motif at 378-382 (DDIYD) is the DDXXD motif element.

The protein belongs to the terpene synthase family. Tpsd subfamily. It depends on Mg(2+) as a cofactor. Requires Mn(2+) as cofactor.

Its subcellular location is the plastid. The protein localises to the chloroplast. It carries out the reaction (2E)-geranyl diphosphate + H2O = (R)-linalool + diphosphate. The protein operates within terpene metabolism; oleoresin biosynthesis. Terpene synthase (TPS) involved in the biosynthesis of monoterpene natural products included in conifer oleoresin secretions and volatile emissions; these compounds contribute to biotic and abiotic stress defense against herbivores and pathogens. Catalyzes the conversion of (2E)-geranyl diphosphate (GPP) to (R)-linalool. The polypeptide is (R)-linalool synthase, chloroplastic (Picea glauca (White spruce)).